Reading from the N-terminus, the 130-residue chain is Sirohydrochlorin cobaltochelatase (130 aa).

His-12 functions as the Proton acceptor in the catalytic mechanism. His-12 serves as a coordination point for Co(2+). Residue His-12 coordinates Ni(2+). Substrate contacts are provided by residues Glu-48 and 73–78 (LASGVH). His-78 lines the Co(2+) pocket. His-78 is a Ni(2+) binding site.

It belongs to the CbiX family. CbiXS subfamily. In terms of assembly, homotetramer; dimer of dimers.

It catalyses the reaction Co-sirohydrochlorin + 2 H(+) = sirohydrochlorin + Co(2+). The enzyme catalyses Ni-sirohydrochlorin + 2 H(+) = sirohydrochlorin + Ni(2+). It participates in cofactor biosynthesis; adenosylcobalamin biosynthesis; cob(II)yrinate a,c-diamide from sirohydrochlorin (anaerobic route): step 1/10. Catalyzes the insertion of Co(2+) into sirohydrochlorin as part of the anaerobic pathway to cobalamin biosynthesis (Potential). Involved in the biosynthesis of the unique nickel-containing tetrapyrrole coenzyme F430, the prosthetic group of methyl-coenzyme M reductase (MCR), which plays a key role in methanogenesis and anaerobic methane oxidation. Catalyzes the insertion of Ni(2+) into sirohydrochlorin to yield Ni-sirohydrochlorin. This is Sirohydrochlorin cobaltochelatase from Methanosarcina acetivorans (strain ATCC 35395 / DSM 2834 / JCM 12185 / C2A).